The sequence spans 430 residues: CinA-like protein (430 aa).

Belongs to the CinA family.

This is CinA-like protein from Prochlorococcus marinus (strain NATL1A).